A 297-amino-acid chain; its full sequence is Guanylate kinase (297 aa).

The Guanylate kinase-like domain maps to 4–183 (GKMIIISGPS…AVAKITDVLH (180 aa)). 11-18 (GPSGVGKG) is an ATP binding site. Residues 204-297 (EQIVKEKYMY…EQKHYNNDEF (94 aa)) are unknown.

It belongs to the guanylate kinase family.

It is found in the cytoplasm. The enzyme catalyses GMP + ATP = GDP + ADP. Its function is as follows. Essential for recycling GMP and indirectly, cGMP. This is Guanylate kinase (gmk) from Mycoplasma capricolum subsp. capricolum (strain California kid / ATCC 27343 / NCTC 10154).